Consider the following 97-residue polypeptide: Protein C4 (97 aa).

2 disordered regions span residues 1-31 (MGLL…PHTG) and 75-97 (ANLP…PSIY). Gly-2 carries the N-myristoyl glycine; by host lipid modification. The span at 77 to 88 (LPTTHMPRQSIQ) shows a compositional bias: polar residues.

This sequence belongs to the geminiviridae protein AC4/C4 family.

The protein resides in the host cell membrane. Pathogenicity determinant. May act as a suppressor of RNA-mediated gene silencing, also known as post-transcriptional gene silencing (PTGS), a mechanism of plant viral defense that limits the accumulation of viral RNAs. This Tomato yellow leaf curl China virus (TYLCCNV) protein is Protein C4.